Reading from the N-terminus, the 314-residue chain is MKQYLDLEKYVLENGTQKGDRTGTGTISTFGYQMRFDLQEGFPIMTTKRVPFKLVVSELLWFLHGDTNIRYLLQHNNNIWNEWAFERFVKSDDYKGEDMTDFGLRAERDSAFKEVYQAEMEKFKARILEDEAFANKYGELGNIYGKQWREWKTSQGETIDQLADLIEMIKTNPNSRRLIVSAWNPKDIPNMALPPCHSLFQFYVADGKLSCQLYQRSADIFLGVPFNIASYALLTHLIAREVGLEVGEFIHTMGDAHLYNNHIEQVKEQLSRTPHKLPKLVLSDKPATIFDFDVADISLDGYNPDPAIKAPISV.

DUMP-binding positions include arginine 21 and 176–177; that span reads RR. Residue cysteine 196 is the Nucleophile of the active site. DUMP is bound by residues 216–219, asparagine 227, and 257–259; these read RSAD and HLY. Aspartate 219 contributes to the (6R)-5,10-methylene-5,6,7,8-tetrahydrofolate binding site. Serine 313 lines the (6R)-5,10-methylene-5,6,7,8-tetrahydrofolate pocket.

It belongs to the thymidylate synthase family. Bacterial-type ThyA subfamily. As to quaternary structure, homodimer.

It localises to the cytoplasm. It catalyses the reaction dUMP + (6R)-5,10-methylene-5,6,7,8-tetrahydrofolate = 7,8-dihydrofolate + dTMP. The protein operates within pyrimidine metabolism; dTTP biosynthesis. Its function is as follows. Catalyzes the reductive methylation of 2'-deoxyuridine-5'-monophosphate (dUMP) to 2'-deoxythymidine-5'-monophosphate (dTMP) while utilizing 5,10-methylenetetrahydrofolate (mTHF) as the methyl donor and reductant in the reaction, yielding dihydrofolate (DHF) as a by-product. This enzymatic reaction provides an intracellular de novo source of dTMP, an essential precursor for DNA biosynthesis. This is Thymidylate synthase from Listeria monocytogenes serotype 4b (strain CLIP80459).